A 472-amino-acid polypeptide reads, in one-letter code: H(+)/Cl(-) exchange transporter ClcA (472 aa).

Over 1–32 (MKAETPSFEAHQFVRVRRGDAVRRLIQRDKTP) the chain is Cytoplasmic. A helical membrane pass occupies residues 33-69 (LAVLFMAAVVGTLAGLVGVAFEKSVNWVQNQRIGALA). Over 70-76 (QVADHWY) the chain is Periplasmic. The chain crosses the membrane as a helical span at residues 77 to 100 (LVWPLAFILSALLAMVGYFLVRRF). Positions 106-110 (GSGIP) match the Selectivity filter part_1 motif. S107 contacts chloride. Positions 109–116 (IPEIEGAL) form an intramembrane region, helical. Topologically, residues 117 to 123 (EELRPVR) are cytoplasmic. A run of 2 helical transmembrane segments spans residues 124 to 141 (WWRV…TLGA) and 148 to 166 (EGPM…LDVF). The Selectivity filter part_2 signature appears at 146–150 (GREGP). Topologically, residues 167-176 (RMRSPEARHT) are cytoplasmic. 2 intramembrane regions (helical) span residues 177-189 (LLAT…LSAA) and 193-201 (PLAGILFII). At 202 to 214 (EEMRPQFRYNLIS) the chain is on the cytoplasmic side. The helical transmembrane segment at 215–232 (IKAVFTGVIMSSIVFRIF) threads the bilayer. Residues 233–252 (NGEAAIIEVGKLSNAPVNTL) lie on the Periplasmic side of the membrane. The helical transmembrane segment at 253-281 (WLYLVLGMLFGCFGPLFNFLVLRTQDLFQ) threads the bilayer. Topologically, residues 282–287 (RIHGGN) are cytoplasmic. Residues 288–309 (IKKWVLIGGLIGGLCGLLGLMQ) traverse the membrane as a helical segment. Over 310 to 329 (PSAVGGGFNLIPIAAAGNFS) the chain is Periplasmic. 2 helical membrane-spanning segments follow: residues 330–349 (VGLL…ICFS) and 355–376 (GIFA…MAAI). The Selectivity filter part_3 motif lies at 355 to 359 (GIFAP). Residues I356 and F357 each coordinate chloride. Residues 377 to 386 (PLFPAYHLDA) lie on the Periplasmic side of the membrane. An intramembrane region (helical) is located at residues 387–401 (GTFAIAGMGALLAAS). The segment at residues 402–404 (VRA) is an intramembrane region (note=Loop between two helices). The segment at residues 405-416 (PLTGIVLVLEMT) is an intramembrane region (helical). The note=Loop between two helices intramembrane region spans 417–421 (DNYQL). A helical transmembrane segment spans residues 422–438 (ILPMIITCLGATLLAQF). Topologically, residues 439–472 (LGGKPLYSTILQRTLAKQEAEQAAKAQQAPRENT) are cytoplasmic. Y445 contributes to the chloride binding site.

The protein belongs to the chloride channel (TC 2.A.49) family. ClcA subfamily. In terms of assembly, homodimer.

The protein resides in the cell inner membrane. It catalyses the reaction 2 chloride(in) + H(+)(out) = 2 chloride(out) + H(+)(in). In terms of biological role, proton-coupled chloride transporter. Functions as antiport system and exchanges two chloride ions for 1 proton. Probably acts as an electrical shunt for an outwardly-directed proton pump that is linked to amino acid decarboxylation, as part of the extreme acid resistance (XAR) response. This is H(+)/Cl(-) exchange transporter ClcA from Klebsiella pneumoniae subsp. pneumoniae (strain ATCC 700721 / MGH 78578).